An 873-amino-acid chain; its full sequence is Coatomer subunit gamma-2 (873 aa).

The segment covering M1–E11 has biased composition (basic and acidic residues). Positions M1 to H21 are disordered. HEAT repeat units follow at residues T64 to D101, R283 to S320, A321 to S355, S356 to R392, S395 to E430, and P467 to D504.

The protein belongs to the COPG family. As to quaternary structure, oligomeric complex.

It localises to the cytoplasm. Its subcellular location is the golgi apparatus membrane. It is found in the cytoplasmic vesicle. The protein localises to the COPI-coated vesicle membrane. In terms of biological role, the coatomer is a cytosolic protein complex that binds to dilysine motifs and reversibly associates with Golgi non-clathrin-coated vesicles, which further mediate biosynthetic protein transport from the ER, via the Golgi up to the trans Golgi network. Coatomer complex is required for budding from Golgi membranes, and is essential for the retrograde Golgi-to-ER transport of dilysine-tagged proteins. This Danio rerio (Zebrafish) protein is Coatomer subunit gamma-2 (copg2).